A 174-amino-acid chain; its full sequence is NADH-ubiquinone oxidoreductase chain 6 (174 aa).

6 helical membrane passes run 1-21, 24-44, 47-67, 86-106, 111-131, and 151-171; these read MTYA…GFSS, SPIY…AVIL, GGGY…MVVF, VEVL…VLWV, GVVV…EGEG, and WLVV…IEIA.

The protein belongs to the complex I subunit 6 family. In terms of assembly, core subunit of respiratory chain NADH dehydrogenase (Complex I) which is composed of 45 different subunits.

It is found in the mitochondrion inner membrane. It catalyses the reaction a ubiquinone + NADH + 5 H(+)(in) = a ubiquinol + NAD(+) + 4 H(+)(out). In terms of biological role, core subunit of the mitochondrial membrane respiratory chain NADH dehydrogenase (Complex I) which catalyzes electron transfer from NADH through the respiratory chain, using ubiquinone as an electron acceptor. Essential for the catalytic activity and assembly of complex I. The protein is NADH-ubiquinone oxidoreductase chain 6 (MT-ND6) of Pongo abelii (Sumatran orangutan).